The following is a 119-amino-acid chain: Non-specific lipid-transfer protein 3 (119 aa).

A signal peptide spans methionine 1–alanine 24. Disulfide bonds link cysteine 28–cysteine 77, cysteine 38–cysteine 54, cysteine 55–cysteine 100, and cysteine 75–cysteine 114.

The protein belongs to the plant LTP family. As to expression, expressed in roots, stem, leaves and tendrils of the mature plant.

In terms of biological role, plant non-specific lipid-transfer proteins transfer phospholipids as well as galactolipids across membranes. May play a role in wax or cutin deposition in the cell walls of expanding epidermal cells and certain secretory tissues. The polypeptide is Non-specific lipid-transfer protein 3 (Pisum sativum (Garden pea)).